We begin with the raw amino-acid sequence, 340 residues long: UPF0284 protein Saci_0020 (340 aa).

It belongs to the UPF0284 family.

The polypeptide is UPF0284 protein Saci_0020 (Sulfolobus acidocaldarius (strain ATCC 33909 / DSM 639 / JCM 8929 / NBRC 15157 / NCIMB 11770)).